The primary structure comprises 158 residues: 6,7-dimethyl-8-ribityllumazine synthase (158 aa).

Residues Phe22, 57–59, and 84–86 contribute to the 5-amino-6-(D-ribitylamino)uracil site; these read AYE and TVI. 89-90 provides a ligand contact to (2S)-2-hydroxy-3-oxobutyl phosphate; the sequence is GT. Residue His92 is the Proton donor of the active site. Phe117 contacts 5-amino-6-(D-ribitylamino)uracil. Arg131 is a (2S)-2-hydroxy-3-oxobutyl phosphate binding site.

Belongs to the DMRL synthase family. In terms of assembly, forms an icosahedral capsid composed of 60 subunits, arranged as a dodecamer of pentamers.

It catalyses the reaction (2S)-2-hydroxy-3-oxobutyl phosphate + 5-amino-6-(D-ribitylamino)uracil = 6,7-dimethyl-8-(1-D-ribityl)lumazine + phosphate + 2 H2O + H(+). The protein operates within cofactor biosynthesis; riboflavin biosynthesis; riboflavin from 2-hydroxy-3-oxobutyl phosphate and 5-amino-6-(D-ribitylamino)uracil: step 1/2. Catalyzes the formation of 6,7-dimethyl-8-ribityllumazine by condensation of 5-amino-6-(D-ribitylamino)uracil with 3,4-dihydroxy-2-butanone 4-phosphate. This is the penultimate step in the biosynthesis of riboflavin. The chain is 6,7-dimethyl-8-ribityllumazine synthase from Pectobacterium atrosepticum (strain SCRI 1043 / ATCC BAA-672) (Erwinia carotovora subsp. atroseptica).